The primary structure comprises 334 residues: DCN1-like protein 3 (334 aa).

In terms of domain architecture, DCUN1 spans 112–301 (VSHQTLSKLF…LFDDFVDYEK (190 aa)). The segment at 308-334 (SGIHDDDNNNDDPLQSHVKAEDPGLVS) is disordered. Residues 325–334 (VKAEDPGLVS) are compositionally biased toward basic and acidic residues.

The protein resides in the cell membrane. In terms of biological role, promotes neddylation of cullin components of SCF-type E3 ubiquitin ligase complexes and thus regulates SCF-type complex activity. Function promotes cell proliferation. This chain is DCN1-like protein 3, found in Drosophila melanogaster (Fruit fly).